The chain runs to 142 residues: Hemoglobin subunit alpha (142 aa).

Positions 2–142 constitute a Globin domain; it reads VLSATDKSNV…VSTVLTSKYR (141 aa). Ser4 carries the phosphoserine modification. Residues Lys8 and Lys12 each carry the N6-succinyllysine modification. Position 17 is an N6-acetyllysine; alternate (Lys17). The residue at position 17 (Lys17) is an N6-succinyllysine; alternate. Tyr25 carries the post-translational modification Phosphotyrosine. Ser36 bears the Phosphoserine mark. Lys41 carries the post-translational modification N6-succinyllysine. A Phosphoserine modification is found at Ser50. Residue His59 coordinates O2. His88 lines the heme b pocket. At Ser103 the chain carries Phosphoserine. Thr109 carries the post-translational modification Phosphothreonine. Phosphoserine is present on Ser125. Thr135 and Thr138 each carry phosphothreonine. Phosphoserine is present on Ser139.

This sequence belongs to the globin family. In terms of assembly, heterotetramer of two alpha chains and two beta chains. Red blood cells.

Its function is as follows. Involved in oxygen transport from the lung to the various peripheral tissues. In terms of biological role, hemopressin acts as an antagonist peptide of the cannabinoid receptor CNR1. Hemopressin-binding efficiently blocks cannabinoid receptor CNR1 and subsequent signaling. This chain is Hemoglobin subunit alpha (HBA), found in Alces alces alces (European moose).